The primary structure comprises 367 residues: Alpha-2-HS-glycoprotein (367 aa).

The N-terminal stretch at 1–18 (MKSLVLLLCLAQLWGCHS) is a signal peptide. A Cystatin fetuin-A-type 1 domain is found at 27–133 (YRQPNCDDPE…KFSVVYAKCD (107 aa)). 6 cysteine pairs are disulfide-bonded: Cys32-Cys358, Cys89-Cys100, Cys114-Cys132, Cys146-Cys149, Cys208-Cys219, and Cys230-Cys247. 3 positions are modified to phosphoserine: Ser134, Ser135, and Ser138. One can recognise a Cystatin fetuin-A-type 2 domain in the interval 144 to 255 (KVCQDCPLLA…TCTVFQTQPV (112 aa)). Asn156 and Asn176 each carry an N-linked (GlcNAc...) asparagine glycan. The interval 254–301 (PVTSQPQPEGANETVPTPVVDPDAPPSPPLGAPGLPPAGSPPDSHVLL) is disordered. An N-linked (GlcNAc...) asparagine glycan is attached at Asn265. Pro residues predominate over residues 276–293 (DAPPSPPLGAPGLPPAGS). Positions 301–340 (LAAPPGHQLHWAHYDLRHTFMGVVSLGSPSGEASHPRKTR) are cleaved as a propeptide — connecting peptide. Thr319 is subject to Phosphothreonine. Phosphoserine occurs at positions 325, 328, and 330. Thr339 carries O-linked (GalNAc...) threonine glycosylation.

The protein belongs to the fetuin family. As to quaternary structure, alpha-2-HS glycoprotein derives from this precursor, when the connecting peptide is cleaved off. The two chains A and B are held together by a single disulfide bond. Phosphorylated by FAM20C in the extracellular medium.

Its subcellular location is the secreted. Promotes endocytosis, possesses opsonic properties and influences the mineral phase of bone. Shows affinity for calcium and barium ions. In Pan troglodytes (Chimpanzee), this protein is Alpha-2-HS-glycoprotein (AHSG).